Reading from the N-terminus, the 427-residue chain is CD209 antigen (427 aa).

The Cytoplasmic segment spans residues 1 to 37; the sequence is MSDSKEPRLQQLGLLEEEQLRGLGFRQTRGYKSLAGC. 3 consecutive short sequence motifs (endocytosis signal) follow at residues 14–15, 16–18, and 31–34; these read LL, EEE, and YKSL. A helical; Signal-anchor for type II membrane protein transmembrane segment spans residues 38–58; sequence LGHGPLVLQLLSFTLLAALLV. At 59-427 the chain is on the extracellular side; it reads QVSKVPSSIS…ASATPNPPPE (369 aa). A glycan (N-linked (GlcNAc...) asparagine) is linked at N80. 8 repeat units span residues 96–118, 119–141, 142–164, 165–187, 188–210, 211–233, 234–256, and 257–280. Residues 96–280 form an 8 X approximate tandem repeats region; that stretch reads KLQEIYQELT…AVERLCRRCP (185 aa). Disulfide bonds link C279–C290, C307–C400, and C379–C392. Residues 286–401 form the C-type lectin domain; the sequence is FQGNCYFMSN…CNLAKFWICK (116 aa). E370, N372, V374, E377, N388, and D389 together coordinate Ca(2+).

Homotetramer. Interacts with C1QBP; the interaction is indicative for a C1q:C1QBP:CD209 signaling complex. Interacts with ICAM2 and ICAM3 by binding to mannose-like carbohydrates. Interacts (via C-type lectin domain) with CEACAM1 (via Lewis X moieties); this interaction is regulated by the glycosylation pattern of CEACAM1 on cell types and regulates contact between dendritic cells and neutrophils.

Its subcellular location is the membrane. Pathogen-recognition receptor expressed on the surface of immature dendritic cells (DCs) and involved in initiation of primary immune response. Thought to mediate the endocytosis of pathogens which are subsequently degraded in lysosomal compartments. The receptor returns to the cell membrane surface and the pathogen-derived antigens are presented to resting T-cells via MHC class II proteins to initiate the adaptive immune response. Probably recognizes in a calcium-dependent manner high mannose N-linked oligosaccharides in a variety of pathogen antigens. Functionally, on DCs it is a high affinity receptor for ICAM2 and ICAM3 by binding to mannose-like carbohydrates. May act as a DC rolling receptor that mediates transendothelial migration of DC presursors from blood to tissues by binding endothelial ICAM2. Seems to regulate DC-induced T-cell proliferation by binding to ICAM3 on T-cells in the immunological synapse formed between DC and T-cells. The sequence is that of CD209 antigen (CD209) from Gorilla gorilla gorilla (Western lowland gorilla).